A 273-amino-acid chain; its full sequence is 6-carboxyhexanoate--CoA ligase (273 aa).

The protein belongs to the BioW family. Homodimer. Mg(2+) is required as a cofactor.

It catalyses the reaction heptanedioate + ATP + CoA = 6-carboxyhexanoyl-CoA + AMP + diphosphate. The protein operates within metabolic intermediate metabolism; pimeloyl-CoA biosynthesis; pimeloyl-CoA from pimelate: step 1/1. Functionally, catalyzes the transformation of pimelate into pimeloyl-CoA with concomitant hydrolysis of ATP to AMP. The protein is 6-carboxyhexanoate--CoA ligase of Alkalihalophilus pseudofirmus (strain ATCC BAA-2126 / JCM 17055 / OF4) (Bacillus pseudofirmus).